A 367-amino-acid chain; its full sequence is Chorismate synthase (367 aa).

Arg-48 and Arg-54 together coordinate NADP(+). FMN-binding positions include Arg-125–Ser-127, Asn-238–Ala-239, Gly-278, Lys-293–Ser-297, and Arg-319.

The protein belongs to the chorismate synthase family. As to quaternary structure, homotetramer. Requires FMNH2 as cofactor.

It catalyses the reaction 5-O-(1-carboxyvinyl)-3-phosphoshikimate = chorismate + phosphate. It participates in metabolic intermediate biosynthesis; chorismate biosynthesis; chorismate from D-erythrose 4-phosphate and phosphoenolpyruvate: step 7/7. In terms of biological role, catalyzes the anti-1,4-elimination of the C-3 phosphate and the C-6 proR hydrogen from 5-enolpyruvylshikimate-3-phosphate (EPSP) to yield chorismate, which is the branch point compound that serves as the starting substrate for the three terminal pathways of aromatic amino acid biosynthesis. This reaction introduces a second double bond into the aromatic ring system. This chain is Chorismate synthase, found in Xanthomonas campestris pv. campestris (strain 8004).